Reading from the N-terminus, the 173-residue chain is Photosystem I assembly protein Ycf3 (173 aa).

TPR repeat units follow at residues 35 to 68 (AYVY…EENS), 72 to 105 (SETL…NPNQ), and 120 to 153 (GRIA…NPGG).

It belongs to the Ycf3 family.

It is found in the cellular thylakoid membrane. Essential for the assembly of the photosystem I (PSI) complex. May act as a chaperone-like factor to guide the assembly of the PSI subunits. The polypeptide is Photosystem I assembly protein Ycf3 (Synechococcus sp. (strain CC9605)).